An 88-amino-acid chain; its full sequence is Small ribosomal subunit protein bS20 (88 aa).

Residues 1–36 (MANTSSAKKATRKIARRTAVNKSRRTQMRGSVRTVE) form a disordered region.

This sequence belongs to the bacterial ribosomal protein bS20 family.

Binds directly to 16S ribosomal RNA. This is Small ribosomal subunit protein bS20 from Rhodopseudomonas palustris (strain HaA2).